Reading from the N-terminus, the 289-residue chain is RNA-binding protein CP29B, chloroplastic (289 aa).

The transit peptide at 1 to 62 directs the protein to the chloroplast; sequence MAASASSLAL…NSPASRFARN (62 aa). A phosphoserine mark is found at Ser6 and Ser12. Val63 carries the N-acetylvaline modification. Residues 91–169 form the RRM 1 domain; it reads LKLFVGNLPF…RPLRVNAGPP (79 aa). A disordered region spans residues 158-199; sequence DGRPLRVNAGPPPPKREDGFSRGPRSSFGSSGSGYGGGGGSG. Residues 170–203 are linker (Gly-rich); the sequence is PPKREDGFSRGPRSSFGSSGSGYGGGGGSGAGSG. The span at 178 to 187 shows a compositional bias: low complexity; sequence SRGPRSSFGS. Residues 188–199 are compositionally biased toward gly residues; sequence SGSGYGGGGGSG. The RRM 2 domain occupies 204 to 282; the sequence is NRVYVGNLSW…RQIRVSEAEA (79 aa).

ADP-ribosylated by the Pseudomonas syringae type III effector HopU1. ADP-ribosylation reduces the ability of the protein to bind RNA. Post-translationally, phosphorylated on tyrosine residues after treatment with abscisic acid (ABA). Phosphorylation may reduce the ability of the protein to bind RNA.

The protein resides in the plastid. The protein localises to the chloroplast. Could be involved in splicing and/or processing of chloroplast RNA's. This chain is RNA-binding protein CP29B, chloroplastic, found in Arabidopsis thaliana (Mouse-ear cress).